Here is a 209-residue protein sequence, read N- to C-terminus: Ribosomal RNA small subunit methyltransferase G (209 aa).

S-adenosyl-L-methionine-binding positions include Gly77, Met82, 128–129, and Arg143; that span reads VE.

This sequence belongs to the methyltransferase superfamily. RNA methyltransferase RsmG family.

The protein localises to the cytoplasm. It carries out the reaction guanosine(527) in 16S rRNA + S-adenosyl-L-methionine = N(7)-methylguanosine(527) in 16S rRNA + S-adenosyl-L-homocysteine. In terms of biological role, specifically methylates the N7 position of guanine in position 527 of 16S rRNA. The chain is Ribosomal RNA small subunit methyltransferase G from Chromobacterium violaceum (strain ATCC 12472 / DSM 30191 / JCM 1249 / CCUG 213 / NBRC 12614 / NCIMB 9131 / NCTC 9757 / MK).